We begin with the raw amino-acid sequence, 239 residues long: Serine protease SplF (239 aa).

A signal peptide spans 1–36 (MNKNIIIKSIAALTILTSITGVGTTVVDGIQQTAKA). Residues H75, D114, and S192 each act as charge relay system in the active site.

Belongs to the peptidase S1B family.

Its subcellular location is the secreted. This is Serine protease SplF (splF) from Staphylococcus aureus (strain JH9).